The sequence spans 640 residues: Protein ALTERED PHOSPHATE STARVATION RESPONSE 1 (640 aa).

The interval 60 to 175 (TPLHLHHNPP…ATPQASSVVS (116 aa)) is disordered. Over residues 68–87 (PPSPSPPPPPPPRPPPPPLS) the composition is skewed to pro residues. The span at 88-103 (PGSETTTWTTTTTSSV) shows a compositional bias: low complexity. Positions 104–118 (LPPPPPPPPPPPPPS) are enriched in pro residues. Residues 144–173 (TTATRTATGTGSDAAVTTAPTTATPQASSV) show a composition bias toward low complexity. Residues 336–371 (KTEKAKKDVEKLESQLSVSSQAIQSASNEIIKLRET) adopt a coiled-coil conformation.

Expressed in the root tip of primary and lateral roots, specifically in the meristematic region, including the quiescent center and lateral root cap cells.

The protein resides in the nucleus. Functionally, required for the coordination of cell differentiation and cell elongation in the root tip. Required for the coordination of cell processes necessary for correct root growth in response to phosphate starvation, through the modulation of the auxin transporter protein PIN7. The polypeptide is Protein ALTERED PHOSPHATE STARVATION RESPONSE 1 (Arabidopsis thaliana (Mouse-ear cress)).